Consider the following 236-residue polypeptide: Protein YIPF6 (236 aa).

Ala-2 is subject to N-acetylalanine. The Cytoplasmic segment spans residues 2-84; sequence AEAEDSPGEQ…HVLYPRKSNA (83 aa). A Phosphoserine modification is found at Ser-7. A helical transmembrane segment spans residues 85-105; sequence LLRDWDLWGPLILCVTLALML. Residues 106-116 are Lumenal-facing; it reads QKSSIDGKNDG. The chain crosses the membrane as a helical span at residues 117–137; it reads GGPEFAEVFVIIWFGAVTITL. At 138-147 the chain is on the cytoplasmic side; it reads NSKLLGGNIS. A helical membrane pass occupies residues 148–168; that stretch reads FFQSLCVLGYCILPLNIAMLI. The Lumenal segment spans residues 169 to 185; that stretch reads CRLLLLAGQGPINFMIR. A helical transmembrane segment spans residues 186 to 206; the sequence is LFVVLLMFAWSVVASTAFLAD. Residues 207–213 are Cytoplasmic-facing; sequence SQPPNRK. The helical transmembrane segment at 214–234 threads the bilayer; that stretch reads ALAVYPVFLFYFVISWMILTF. Over 235–236 the chain is Lumenal; it reads TP.

This sequence belongs to the YIP1 family. Predominantly interacts with YIPF1 or YIPF2, but may also form a ternary complex with YIPF1 and YIPF2. This interaction may stabilize YIPF1 and YIPF2.

Its subcellular location is the golgi apparatus membrane. In terms of biological role, may be required for stable YIPF1 and YIPF2 protein expression. The chain is Protein YIPF6 (Yipf6) from Mus musculus (Mouse).